The sequence spans 542 residues: Putative serine/threonine-protein kinase L205 (542 aa).

A compositionally biased stretch (basic and acidic residues) spans 20-30 (FEKKSVGHNSD). The tract at residues 20-49 (FEKKSVGHNSDDEYDDTVPYNEDDETSEEE) is disordered. Positions 31–49 (DEYDDTVPYNEDDETSEEE) are enriched in acidic residues. The 470-residue stretch at 69–538 (YLLLKKIGSG…ADELLKHPWL (470 aa)) folds into the Protein kinase domain. Residues 75–83 (IGSGNNASV) and Lys-98 each bind ATP. The Proton acceptor role is filled by Asp-201. Residues 278-314 (EELIPDDPDNNEKYYDSTDSEEYDYSDNSDYYDDDED) form a disordered region. Residues 295–314 (TDSEEYDYSDNSDYYDDDED) are compositionally biased toward acidic residues.

Belongs to the protein kinase superfamily. Ser/Thr protein kinase family.

It catalyses the reaction L-seryl-[protein] + ATP = O-phospho-L-seryl-[protein] + ADP + H(+). It carries out the reaction L-threonyl-[protein] + ATP = O-phospho-L-threonyl-[protein] + ADP + H(+). This Acanthamoeba polyphaga (Amoeba) protein is Putative serine/threonine-protein kinase L205.